The following is a 245-amino-acid chain: Uridylate kinase (245 aa).

15–18 (KLSG) contacts ATP. Residues 23 to 28 (GDEGFG) form an involved in allosteric activation by GTP region. Residue Gly-57 coordinates UMP. 2 residues coordinate ATP: Gly-58 and Arg-62. Residues Asp-77 and 138 to 145 (TGNPFCTT) each bind UMP. ATP is bound by residues Thr-165, Tyr-171, and Asp-174.

It belongs to the UMP kinase family. As to quaternary structure, homohexamer.

It is found in the cytoplasm. The enzyme catalyses UMP + ATP = UDP + ADP. Its pathway is pyrimidine metabolism; CTP biosynthesis via de novo pathway; UDP from UMP (UMPK route): step 1/1. Its activity is regulated as follows. Allosterically activated by GTP. Inhibited by UTP. Functionally, catalyzes the reversible phosphorylation of UMP to UDP. The polypeptide is Uridylate kinase (Shewanella baltica (strain OS155 / ATCC BAA-1091)).